A 122-amino-acid chain; its full sequence is Large ribosomal subunit protein uL22 (122 aa).

The disordered stretch occupies residues 102–122 (VAEGKEMKSSKSHKKNQAEGK).

The protein belongs to the universal ribosomal protein uL22 family. Part of the 50S ribosomal subunit.

This protein binds specifically to 23S rRNA; its binding is stimulated by other ribosomal proteins, e.g. L4, L17, and L20. It is important during the early stages of 50S assembly. It makes multiple contacts with different domains of the 23S rRNA in the assembled 50S subunit and ribosome. Its function is as follows. The globular domain of the protein is located near the polypeptide exit tunnel on the outside of the subunit, while an extended beta-hairpin is found that lines the wall of the exit tunnel in the center of the 70S ribosome. In Helicobacter pylori (strain HPAG1), this protein is Large ribosomal subunit protein uL22.